Here is a 122-residue protein sequence, read N- to C-terminus: Large ribosomal subunit protein bL12 (122 aa).

It belongs to the bacterial ribosomal protein bL12 family. As to quaternary structure, homodimer. Part of the ribosomal stalk of the 50S ribosomal subunit. Forms a multimeric L10(L12)X complex, where L10 forms an elongated spine to which 2 to 4 L12 dimers bind in a sequential fashion. Binds GTP-bound translation factors.

Functionally, forms part of the ribosomal stalk which helps the ribosome interact with GTP-bound translation factors. Is thus essential for accurate translation. The protein is Large ribosomal subunit protein bL12 of Pseudomonas aeruginosa (strain LESB58).